Consider the following 116-residue polypeptide: NADH-ubiquinone oxidoreductase chain 3 (116 aa).

A run of 3 helical transmembrane segments spans residues 8–28 (VVAT…LPSL), 56–76 (FFLI…LLPL), and 88–108 (TLLW…YEWF).

It belongs to the complex I subunit 3 family.

The protein resides in the mitochondrion membrane. The enzyme catalyses a ubiquinone + NADH + 5 H(+)(in) = a ubiquinol + NAD(+) + 4 H(+)(out). Core subunit of the mitochondrial membrane respiratory chain NADH dehydrogenase (Complex I) that is believed to belong to the minimal assembly required for catalysis. Complex I functions in the transfer of electrons from NADH to the respiratory chain. The immediate electron acceptor for the enzyme is believed to be ubiquinone. This is NADH-ubiquinone oxidoreductase chain 3 (MT-ND3) from Scyliorhinus canicula (Small-spotted catshark).